A 200-amino-acid polypeptide reads, in one-letter code: Protein GrpE (200 aa).

Positions Met-1–Glu-23 are enriched in acidic residues. Residues Met-1–Glu-39 form a disordered region.

This sequence belongs to the GrpE family. In terms of assembly, homodimer.

It localises to the cytoplasm. Its function is as follows. Participates actively in the response to hyperosmotic and heat shock by preventing the aggregation of stress-denatured proteins, in association with DnaK and GrpE. It is the nucleotide exchange factor for DnaK and may function as a thermosensor. Unfolded proteins bind initially to DnaJ; upon interaction with the DnaJ-bound protein, DnaK hydrolyzes its bound ATP, resulting in the formation of a stable complex. GrpE releases ADP from DnaK; ATP binding to DnaK triggers the release of the substrate protein, thus completing the reaction cycle. Several rounds of ATP-dependent interactions between DnaJ, DnaK and GrpE are required for fully efficient folding. The protein is Protein GrpE of Brachyspira hyodysenteriae (strain ATCC 49526 / WA1).